The chain runs to 285 residues: Bifunctional protein FolD (285 aa).

Residues 165–167 (GRS) and serine 190 each bind NADP(+).

This sequence belongs to the tetrahydrofolate dehydrogenase/cyclohydrolase family. Homodimer.

The catalysed reaction is (6R)-5,10-methylene-5,6,7,8-tetrahydrofolate + NADP(+) = (6R)-5,10-methenyltetrahydrofolate + NADPH. It carries out the reaction (6R)-5,10-methenyltetrahydrofolate + H2O = (6R)-10-formyltetrahydrofolate + H(+). The protein operates within one-carbon metabolism; tetrahydrofolate interconversion. In terms of biological role, catalyzes the oxidation of 5,10-methylenetetrahydrofolate to 5,10-methenyltetrahydrofolate and then the hydrolysis of 5,10-methenyltetrahydrofolate to 10-formyltetrahydrofolate. The protein is Bifunctional protein FolD of Burkholderia pseudomallei (strain 1710b).